Consider the following 100-residue polypeptide: Small ribosomal subunit protein uS14c (100 aa).

This sequence belongs to the universal ribosomal protein uS14 family. Part of the 30S ribosomal subunit.

Its subcellular location is the plastid. It localises to the chloroplast. Functionally, binds 16S rRNA, required for the assembly of 30S particles. This Illicium oligandrum (Star anise) protein is Small ribosomal subunit protein uS14c.